A 174-amino-acid polypeptide reads, in one-letter code: Transcription antitermination protein NusB (174 aa).

Positions 1-28 (MVEPKKPFMRKPPPKTGDKKPGDRKANR) are disordered. The segment covering 16-25 (TGDKKPGDRK) has biased composition (basic and acidic residues).

It belongs to the NusB family.

Involved in transcription antitermination. Required for transcription of ribosomal RNA (rRNA) genes. Binds specifically to the boxA antiterminator sequence of the ribosomal RNA (rrn) operons. In Rhodopseudomonas palustris (strain BisB5), this protein is Transcription antitermination protein NusB.